Here is an 869-residue protein sequence, read N- to C-terminus: Leucine--tRNA ligase (869 aa).

The short motif at 42-52 is the 'HIGH' region element; that stretch reads PYPSGRLHMGH. Positions 620-624 match the 'KMSKS' region motif; sequence KMSKS. K623 serves as a coordination point for ATP.

This sequence belongs to the class-I aminoacyl-tRNA synthetase family.

The protein resides in the cytoplasm. It catalyses the reaction tRNA(Leu) + L-leucine + ATP = L-leucyl-tRNA(Leu) + AMP + diphosphate. In Hamiltonella defensa subsp. Acyrthosiphon pisum (strain 5AT), this protein is Leucine--tRNA ligase.